A 258-amino-acid chain; its full sequence is tRNA pseudouridine synthase A (258 aa).

The active-site Nucleophile is the aspartate 53. Tyrosine 111 lines the substrate pocket.

Belongs to the tRNA pseudouridine synthase TruA family. As to quaternary structure, homodimer.

It catalyses the reaction uridine(38/39/40) in tRNA = pseudouridine(38/39/40) in tRNA. Functionally, formation of pseudouridine at positions 38, 39 and 40 in the anticodon stem and loop of transfer RNAs. This Streptococcus agalactiae serotype Ia (strain ATCC 27591 / A909 / CDC SS700) protein is tRNA pseudouridine synthase A.